Reading from the N-terminus, the 670-residue chain is Tyramine beta-hydroxylase (670 aa).

Basic residues predominate over residues 26 to 35; sequence HHQLAYHHHK. Residues 26 to 63 are disordered; that stretch reads HHQLAYHHHKQEQQQQQQQQQQQQAKQKQKQNGVQQGR. The segment covering 38–61 has biased composition (low complexity); that stretch reads QQQQQQQQQQQQAKQKQKQNGVQQ. The helical transmembrane segment at 65-81 threads the bilayer; that stretch reads PTFMPVMLLLLMATLLT. The DOMON domain occupies 104–220; the sequence is KEIKLSWMVD…GTMYVVWARG (117 aa). An N-linked (GlcNAc...) asparagine glycan is attached at asparagine 235. Tyrosine 281 is a catalytic residue. 2 disulfide bridges follow: cysteine 283/cysteine 334 and cysteine 319/cysteine 344. Cu(2+) contacts are provided by histidine 312 and histidine 313. Cu(2+)-binding residues include histidine 382, histidine 461, histidine 463, and methionine 536. Cystine bridges form between cysteine 439/cysteine 552, cysteine 443/cysteine 613, and cysteine 515/cysteine 537. Histidine 461 is an active-site residue. A glycan (N-linked (GlcNAc...) asparagine) is linked at asparagine 614.

Belongs to the copper type II ascorbate-dependent monooxygenase family. As to quaternary structure, is most likely a monomer under physiological conditions, although under conditions of high pH and low ionic strength the dimeric form predominates. Both forms are equally active. Cu(2+) serves as cofactor. As to expression, present in head and in neurons innervating the oviduct (at protein level).

It localises to the membrane. It catalyses the reaction tyramine + L-ascorbate + O2 = (R)-octopamine + L-dehydroascorbate + H2O. Its function is as follows. Catalyzes the hydroxylation of tyramine into octopamine, a neurotransmitter involved in ovulation and locomotion. Functions in an amine-mediated Bacc-dependent signaling pathway that negatively regulates acute ethanol sensitivity. Involved in facilitation of nociceptive escape behavior in response to potentially damaging stimuli, such as high temperatures. In Drosophila melanogaster (Fruit fly), this protein is Tyramine beta-hydroxylase (Tbh).